Reading from the N-terminus, the 223-residue chain is UPF0173 metal-dependent hydrolase THA_544 (223 aa).

Belongs to the UPF0173 family.

This chain is UPF0173 metal-dependent hydrolase THA_544, found in Thermosipho africanus (strain TCF52B).